Consider the following 301-residue polypeptide: Acetyl-coenzyme A carboxylase carboxyl transferase subunit beta (301 aa).

Positions L25–A294 constitute a CoA carboxyltransferase N-terminal domain.

It belongs to the AccD/PCCB family. As to quaternary structure, acetyl-CoA carboxylase is a heterohexamer composed of biotin carboxyl carrier protein (AccB), biotin carboxylase (AccC) and two subunits each of ACCase subunit alpha (AccA) and ACCase subunit beta (AccD).

It localises to the cytoplasm. It carries out the reaction N(6)-carboxybiotinyl-L-lysyl-[protein] + acetyl-CoA = N(6)-biotinyl-L-lysyl-[protein] + malonyl-CoA. It participates in lipid metabolism; malonyl-CoA biosynthesis; malonyl-CoA from acetyl-CoA: step 1/1. Its function is as follows. Component of the acetyl coenzyme A carboxylase (ACC) complex. Biotin carboxylase (BC) catalyzes the carboxylation of biotin on its carrier protein (BCCP) and then the CO(2) group is transferred by the transcarboxylase to acetyl-CoA to form malonyl-CoA. The polypeptide is Acetyl-coenzyme A carboxylase carboxyl transferase subunit beta (Rhizobium etli (strain ATCC 51251 / DSM 11541 / JCM 21823 / NBRC 15573 / CFN 42)).